Reading from the N-terminus, the 338-residue chain is Phenylalanine--tRNA ligase alpha subunit (338 aa).

Glutamate 252 serves as a coordination point for Mg(2+).

Belongs to the class-II aminoacyl-tRNA synthetase family. Phe-tRNA synthetase alpha subunit type 1 subfamily. As to quaternary structure, tetramer of two alpha and two beta subunits. It depends on Mg(2+) as a cofactor.

Its subcellular location is the cytoplasm. The enzyme catalyses tRNA(Phe) + L-phenylalanine + ATP = L-phenylalanyl-tRNA(Phe) + AMP + diphosphate + H(+). The polypeptide is Phenylalanine--tRNA ligase alpha subunit (Pseudomonas fluorescens (strain Pf0-1)).